The sequence spans 467 residues: Fumarate hydratase class II (467 aa).

Substrate-binding positions include 98 to 100 (SGT), arginine 126, 129 to 132 (HPND), 139 to 141 (SSN), and threonine 187. The Proton donor/acceptor role is filled by histidine 188. Serine 318 is a catalytic residue. Residues serine 319 and 324–326 (KVN) contribute to the substrate site.

This sequence belongs to the class-II fumarase/aspartase family. Fumarase subfamily. As to quaternary structure, homotetramer.

It localises to the cytoplasm. The catalysed reaction is (S)-malate = fumarate + H2O. It functions in the pathway carbohydrate metabolism; tricarboxylic acid cycle; (S)-malate from fumarate: step 1/1. Functionally, involved in the TCA cycle. Catalyzes the stereospecific interconversion of fumarate to L-malate. In Salmonella typhi, this protein is Fumarate hydratase class II.